The primary structure comprises 475 residues: Sulfate adenylyltransferase subunit 1 (475 aa).

Positions 25-239 constitute a tr-type G domain; sequence KSLLRFLTCG…EVLETVEIQR (215 aa). The interval 34 to 41 is G1; it reads GSVDDGKS. 34-41 is a GTP binding site; that stretch reads GSVDDGKS. Positions 92–96 are G2; sequence GITID. The interval 113–116 is G3; that stretch reads DTPG. GTP contacts are provided by residues 113–117 and 168–171; these read DTPGH and NKMD. Residues 168 to 171 form a G4 region; sequence NKMD. Residues 206–208 are G5; it reads SAL.

Belongs to the TRAFAC class translation factor GTPase superfamily. Classic translation factor GTPase family. CysN/NodQ subfamily. Heterodimer composed of CysD, the smaller subunit, and CysN.

The catalysed reaction is sulfate + ATP + H(+) = adenosine 5'-phosphosulfate + diphosphate. Its pathway is sulfur metabolism; hydrogen sulfide biosynthesis; sulfite from sulfate: step 1/3. In terms of biological role, with CysD forms the ATP sulfurylase (ATPS) that catalyzes the adenylation of sulfate producing adenosine 5'-phosphosulfate (APS) and diphosphate, the first enzymatic step in sulfur assimilation pathway. APS synthesis involves the formation of a high-energy phosphoric-sulfuric acid anhydride bond driven by GTP hydrolysis by CysN coupled to ATP hydrolysis by CysD. In Escherichia fergusonii (strain ATCC 35469 / DSM 13698 / CCUG 18766 / IAM 14443 / JCM 21226 / LMG 7866 / NBRC 102419 / NCTC 12128 / CDC 0568-73), this protein is Sulfate adenylyltransferase subunit 1.